Reading from the N-terminus, the 243-residue chain is Probable 2-phosphosulfolactate phosphatase (243 aa).

Belongs to the ComB family. It depends on Mg(2+) as a cofactor.

The catalysed reaction is (2R)-O-phospho-3-sulfolactate + H2O = (2R)-3-sulfolactate + phosphate. The polypeptide is Probable 2-phosphosulfolactate phosphatase (Prochlorococcus marinus (strain SARG / CCMP1375 / SS120)).